The chain runs to 229 residues: Apoptosis regulator Bcl-2 (229 aa).

Positions 10 to 30 (DNREIVMKYIHYKLSQRGYEW) match the BH4 motif. The tract at residues 30-82 (WDAGDAGAAPPGAAPAPGILSSQPGRTPAPSRTSPPPPPAAAAGPAPSPVPPV) is disordered. The segment covering 33 to 61 (GDAGAAPPGAAPAPGILSSQPGRTPAPSR) has biased composition (low complexity). Threonine 62 bears the Phosphothreonine; by MAPK8 mark. The span at 62-81 (TSPPPPPAAAAGPAPSPVPP) shows a compositional bias: pro residues. Serine 63 bears the Phosphoserine; by MAPK8 and PKC mark. Serine 77 bears the Phosphoserine; by MAPK8 mark. The BH3 signature appears at 83–97 (VHLTLRQAGDDFSRR). Residues 126–145 (ELFRDGVNWGRIVAFFEFGG) carry the BH1 motif. Residues 177–192 (TWIQDNGGWDAFVELY) carry the BH2 motif. A helical transmembrane segment spans residues 202–223 (FSWLSLKALLSLALVGACITLG).

It belongs to the Bcl-2 family. In terms of assembly, forms homodimers, and heterodimers with BAX, BAD, BAK and Bcl-X(L). Heterodimerization with BAX requires intact BH1 and BH2 motifs, and is necessary for anti-apoptotic activity. Component of the complex, at least composed of LRPPRC, BECN1 and BCL2; the interactions prevent BECN1 from forming an autophagy-inducing complex with PIK3C3. Interacts with EI24. Also interacts with APAF1, BBC3, BCL2L1, BNIPL, MRPL41 and TP53BP2. Binding to FKBP8 seems to target BCL2 to the mitochondria and probably interferes with the binding of BCL2 to its targets. Interacts with BAG1 in an ATP-dependent manner. Interacts with RAF1 (the 'Ser-338' and 'Ser-339' phosphorylated form). Interacts (via the BH4 domain) with EGLN3; the interaction prevents the formation of the BAX-BCL2 complex and inhibits the anti-apoptotic activity of BCL2. Interacts with G0S2; this interaction also prevents the formation of the anti-apoptotic BAX-BCL2 complex. Interacts with RTL10/BOP. Interacts with the SCF(FBXO10) complex. Interacts (via the loop between motifs BH4 and BH3) with NLRP1 (via LRR repeats), but not with NLRP2, NLRP3, NLRP4, PYCARD, nor MEFV. Interacts with GIMAP3/IAN4, GIMAP4/IAN1 and GIMAP5/IAN5. Interacts with BCAP31. Interacts with IRF3; the interaction is inhibited by Sendai virus infection. Interacts with BECN1; thereby inhibiting autophagy in non-starvation conditions. Interacts with AMBRA1; thereby inhibiting autophagy. In terms of processing, phosphorylation/dephosphorylation on Ser-63 regulates anti-apoptotic activity. Growth factor-stimulated phosphorylation on Ser-63 by PKC is required for the anti-apoptosis activity and occurs during the G2/M phase of the cell cycle. In the absence of growth factors, BCL2 appears to be phosphorylated by other protein kinases such as ERKs and stress-activated kinases. Phosphorylated by MAPK8/JNK1 at Thr-62, Ser-63 and Ser-77, which stimulates starvation-induced autophagy. Dephosphorylated by protein phosphatase 2A (PP2A). Post-translationally, proteolytically cleaved by caspases during apoptosis. The cleaved protein, lacking the BH4 motif, has pro-apoptotic activity, causes the release of cytochrome c into the cytosol promoting further caspase activity. Monoubiquitinated by PRKN, leading to an increase in its stability. Ubiquitinated by SCF(FBXO10), leading to its degradation by the proteasome.

It localises to the mitochondrion outer membrane. The protein resides in the nucleus membrane. Its subcellular location is the endoplasmic reticulum membrane. The protein localises to the cytoplasm. Functionally, suppresses apoptosis in a variety of cell systems including factor-dependent lymphohematopoietic and neural cells. Regulates cell death by controlling the mitochondrial membrane permeability. Appears to function in a feedback loop system with caspases. Inhibits caspase activity either by preventing the release of cytochrome c from the mitochondria and/or by binding to the apoptosis-activating factor (APAF-1). Also acts as an inhibitor of autophagy: interacts with BECN1 and AMBRA1 during non-starvation conditions and inhibits their autophagy function. May attenuate inflammation by impairing NLRP1-inflammasome activation, hence CASP1 activation and IL1B release. In Bos taurus (Bovine), this protein is Apoptosis regulator Bcl-2 (BCL2).